A 422-amino-acid polypeptide reads, in one-letter code: Ribosomal RNA small subunit methyltransferase B (422 aa).

S-adenosyl-L-methionine contacts are provided by residues 254–260 (CAAPGGK), D277, D303, and D322. C375 functions as the Nucleophile in the catalytic mechanism.

Belongs to the class I-like SAM-binding methyltransferase superfamily. RsmB/NOP family.

Its subcellular location is the cytoplasm. It catalyses the reaction cytidine(967) in 16S rRNA + S-adenosyl-L-methionine = 5-methylcytidine(967) in 16S rRNA + S-adenosyl-L-homocysteine + H(+). In terms of biological role, specifically methylates the cytosine at position 967 (m5C967) of 16S rRNA. The chain is Ribosomal RNA small subunit methyltransferase B from Proteus mirabilis (strain HI4320).